Here is a 496-residue protein sequence, read N- to C-terminus: Glutamyl-tRNA(Gln) amidotransferase subunit A (496 aa).

Catalysis depends on charge relay system residues Lys-75 and Ser-150. Ser-174 serves as the catalytic Acyl-ester intermediate.

The protein belongs to the amidase family. GatA subfamily. In terms of assembly, heterotrimer of A, B and C subunits.

It carries out the reaction L-glutamyl-tRNA(Gln) + L-glutamine + ATP + H2O = L-glutaminyl-tRNA(Gln) + L-glutamate + ADP + phosphate + H(+). In terms of biological role, allows the formation of correctly charged Gln-tRNA(Gln) through the transamidation of misacylated Glu-tRNA(Gln) in organisms which lack glutaminyl-tRNA synthetase. The reaction takes place in the presence of glutamine and ATP through an activated gamma-phospho-Glu-tRNA(Gln). The chain is Glutamyl-tRNA(Gln) amidotransferase subunit A from Burkholderia pseudomallei (strain 668).